Reading from the N-terminus, the 387-residue chain is Fiber protein 2 (387 aa).

The protein belongs to the adenoviridae fiber family. Homotrimer. Interacts with host receptor CXCAR. Interacts (via N-terminal tail region) with pentons.

The protein resides in the virion. It localises to the host nucleus. In terms of biological role, forms spikes that protrude from each vertex of the icosahedral capsid. Interacts with host receptor CXCAR to provide virion initial attachment to target cell. Fiber proteins are shed during virus entry, when virus is still at the cell surface. The chain is Fiber protein 2 from Homo sapiens (Human).